Consider the following 47-residue polypeptide: Gas vesicle protein A (47 aa).

The protein belongs to the gas vesicle GvpA family. The gas vesicle shell is 2 nm thick and consists of a single layer of this protein. It forms helical ribs nearly perpendicular to the long axis of the vesicle.

Its subcellular location is the gas vesicle shell. Gas vesicles are hollow, gas filled proteinaceous nanostructures found in some microorganisms. During planktonic growth they allow positioning of the organism at a favorable depth for light or nutrient acquisition. GvpA forms the protein shell. The protein is Gas vesicle protein A of Dactylococcopsis salina (Myxobaktron salinum).